The sequence spans 450 residues: Putative serine/threonine-protein kinase R517/R518 (450 aa).

One can recognise a Protein kinase domain in the interval 9-290 (KMTDTVLGKG…WSELFHHYWF (282 aa)). ATP is bound by residues 15-23 (LGKGGFSEV) and lysine 38. The active-site Proton acceptor is aspartate 140.

It belongs to the protein kinase superfamily. Ser/Thr protein kinase family.

It carries out the reaction L-seryl-[protein] + ATP = O-phospho-L-seryl-[protein] + ADP + H(+). The catalysed reaction is L-threonyl-[protein] + ATP = O-phospho-L-threonyl-[protein] + ADP + H(+). The sequence is that of Putative serine/threonine-protein kinase R517/R518 from Acanthamoeba polyphaga mimivirus (APMV).